Reading from the N-terminus, the 177-residue chain is Large ribosomal subunit protein uL6 (177 aa).

It belongs to the universal ribosomal protein uL6 family. Part of the 50S ribosomal subunit.

Functionally, this protein binds to the 23S rRNA, and is important in its secondary structure. It is located near the subunit interface in the base of the L7/L12 stalk, and near the tRNA binding site of the peptidyltransferase center. The protein is Large ribosomal subunit protein uL6 of Bordetella petrii (strain ATCC BAA-461 / DSM 12804 / CCUG 43448).